We begin with the raw amino-acid sequence, 304 residues long: Trypsin-3 (304 aa).

Residues 81–301 (IVGGYTCEEN…YVDWIKDTIA (221 aa)) form the Peptidase S1 domain. Intrachain disulfides connect C87–C217, C105–C121, C196–C263, C228–C242, and C253–C277. H120 serves as the catalytic Charge relay system. Residues E132, N134, V137, E139, and E142 each contribute to the Ca(2+) site. The active-site Charge relay system is the D164. Position 211 is a sulfotyrosine (Y211). S257 (charge relay system) is an active-site residue.

It belongs to the peptidase S1 family. Requires Ca(2+) as cofactor. Detected in pancreas and pancreatic fluid (at protein level). Expressed in pancreas and brain. Detected in ileum.

The protein resides in the secreted. It catalyses the reaction Preferential cleavage: Arg-|-Xaa, Lys-|-Xaa.. Its activity is regulated as follows. Not inhibited by Kunitz-type trypsin inhibitors. Digestive protease that cleaves proteins preferentially after an Arg residue and has proteolytic activity toward Kunitz-type trypsin inhibitors. In Homo sapiens (Human), this protein is Trypsin-3 (PRSS3).